A 219-amino-acid chain; its full sequence is Cytidylate kinase (219 aa).

21-29 serves as a coordination point for ATP; sequence GPAASGKGT.

This sequence belongs to the cytidylate kinase family. Type 1 subfamily.

The protein localises to the cytoplasm. The enzyme catalyses CMP + ATP = CDP + ADP. The catalysed reaction is dCMP + ATP = dCDP + ADP. In Rickettsia akari (strain Hartford), this protein is Cytidylate kinase.